A 222-amino-acid polypeptide reads, in one-letter code: UPF0488 protein C8orf33 homolog (222 aa).

Residues 1–16 (MAEPGRPAREAPAASS) show a composition bias toward low complexity. 3 disordered regions span residues 1–103 (MAEP…AEQL), 119–146 (KTQR…TPLP), and 186–210 (VSEA…KTTP). Residue Ala-2 is modified to N-acetylalanine. A compositionally biased stretch (basic residues) spans 17–28 (RKTHRAPRRPRP). Position 27 is an omega-N-methylarginine (Arg-27). Positions 29 to 39 (SRSASGASEPP) are enriched in low complexity. Ser-75 is subject to Phosphoserine. Positions 93–103 (PPSAEAQAEQL) are enriched in low complexity.

The protein belongs to the UPF0488 family.

The protein is UPF0488 protein C8orf33 homolog of Mus musculus (Mouse).